A 238-amino-acid chain; its full sequence is Snake venom metalloproteinase HF-1 (238 aa).

Positions 17–221 (RYIQLVVVAD…YNPQCILNKP (205 aa)) constitute a Peptidase M12B domain. Asp-106 lines the Ca(2+) pocket. Cystine bridges form between Cys-130–Cys-216 and Cys-174–Cys-181. His-158 is a binding site for Zn(2+). Residue Glu-159 is part of the active site. His-162 and His-168 together coordinate Zn(2+). Cys-216 and Asn-219 together coordinate Ca(2+).

Monomer. Zn(2+) serves as cofactor. As to expression, expressed by the venom gland.

It is found in the secreted. Inhibited by EDTA and EGTA. Inhibited by serum and antihemorrhagic factors Da2-I and Da2-II from D.albiventris. Not inhibited by PMSF or SBT-I. In terms of biological role, snake venom zinc metalloprotease that is weakly hemorrhagic and has Aalpha, Bbeta fibrinogenolytic activities. Cleaves the Aalpha chain of fibrinogen first, followed by the Bbeta chain and shows no effect on the gamma chain. Has caseinolytic activity. Induces dose-dependent edema. This chain is Snake venom metalloproteinase HF-1, found in Bothrops marajoensis (Marajo lancehead).